We begin with the raw amino-acid sequence, 642 residues long: Threonine--tRNA ligase (642 aa).

A TGS domain is found at 1–61 (MPVITLPDGS…ETDAELSIIT (61 aa)). The catalytic stretch occupies residues 243-534 (DHRKIGKQLD…LIEEYAGRFP (292 aa)). 3 residues coordinate Zn(2+): Cys-334, His-385, and His-511.

Belongs to the class-II aminoacyl-tRNA synthetase family. Homodimer. It depends on Zn(2+) as a cofactor.

The protein resides in the cytoplasm. The catalysed reaction is tRNA(Thr) + L-threonine + ATP = L-threonyl-tRNA(Thr) + AMP + diphosphate + H(+). Catalyzes the attachment of threonine to tRNA(Thr) in a two-step reaction: L-threonine is first activated by ATP to form Thr-AMP and then transferred to the acceptor end of tRNA(Thr). Also edits incorrectly charged L-seryl-tRNA(Thr). The chain is Threonine--tRNA ligase from Shewanella putrefaciens (strain CN-32 / ATCC BAA-453).